Here is a 380-residue protein sequence, read N- to C-terminus: Apelin receptor (380 aa).

Topologically, residues 1–30 are extracellular; that stretch reads MEEGGDFDNYYGADNQSECEYTDWKSSGAL. A glycan (N-linked (GlcNAc...) asparagine) is linked at N15. Disulfide bonds link C19/C281 and C102/C181. The helical transmembrane segment at 31–54 threads the bilayer; sequence IPAIYMLVFLLGTTGNGLVLWTVF. Residues 55–64 lie on the Cytoplasmic side of the membrane; the sequence is RSSREKRRSA. Residues 65 to 86 traverse the membrane as a helical segment; it reads DIFIASLAVADLTFVVTLPLWA. Topologically, residues 87–99 are extracellular; the sequence is TYTYRDYDWPFGT. A helical membrane pass occupies residues 100-125; that stretch reads FFCKLSSYLIFVNMYASVFCLTGLSF. The Cytoplasmic portion of the chain corresponds to 126-146; it reads DRYLAIVRPVANARLRLRVSG. Residues 147–164 form a helical membrane-spanning segment; the sequence is AVATAVLWVLAALLAMPV. Residues 165–198 are Extracellular-facing; the sequence is MVLRTTGDLENTTKVQCYMDYSMVATVSSEWAWE. N-linked (GlcNAc...) asparagine glycosylation is present at N175. A helical transmembrane segment spans residues 199-223; sequence VGLGVSSTTVGFVVPFTIMLTCYFF. Residues 224–246 are Cytoplasmic-facing; that stretch reads IAQTIAGHFRKERIEGLRKRRRL. A helical transmembrane segment spans residues 247–270; it reads LSIIVVLVVTFALCWMPYHLVKTL. Residues 271 to 289 lie on the Extracellular side of the membrane; that stretch reads YMLGSLLHWPCDFDLFLMN. The chain crosses the membrane as a helical span at residues 290–312; that stretch reads IFPYCTCISYVNSCLNPFLYAFF. Residues 313 to 380 are Cytoplasmic-facing; it reads DPRFRQACTS…PYSQETLVVD (68 aa). A compositionally biased stretch (low complexity) spans 342–351; that stretch reads KSASYSSGHS. Residues 342 to 380 are disordered; it reads KSASYSSGHSQGPGPNMGKGGEQMHEKSIPYSQETLVVD. The span at 371 to 380 shows a compositional bias: polar residues; that stretch reads PYSQETLVVD.

This sequence belongs to the G-protein coupled receptor 1 family. In terms of assembly, homodimer; dimerization inhibits APLNR-mediated G protein and beta-arrestin signaling pathways compared to monomeric APLNR. As to expression, expressed in heart, brain, kidney, stomach, spleen, thymus, lung, ovary, small intestine and colon, adipose tissues and pancreas. Expressed in glial cells, astrocytes and neuronal subpopulations. Expressed in embryonic (ESCs) and induced (iPSCs) pluripotent stem cells.

The protein resides in the cell membrane. Functionally, g protein-coupled receptor for peptide hormones apelin (APLN) and apelin receptor early endogenous ligand (APELA/ELA), that plays a role in the regulation of normal cardiovascular function and fluid homeostasis. When acting as apelin receptor, activates both G(i) protein pathway that inhibits adenylate cyclase activity, and the beta-arrestin pathway that promotes internalization of the receptor. APLNR/APJ also functions as mechanoreceptor that is activated by pathological stimuli in a G-protein-independent fashion to induce beta-arrestin signaling, hence eliciting cardiac hypertrophy. However, the presence of apelin ligand blunts cardiac hypertrophic induction from APLNR/APJ on response to pathological stimuli. Plays a key role in early development such as gastrulation, blood vessels formation and heart morphogenesis by acting as a APELA receptor. May promote angioblast migration toward the embryonic midline, i.e. the position of the future vessel formation, during vasculogenesis. Promotes sinus venosus (SV)-derived endothelial cells migration into the developing heart to promote coronary blood vessel development. Also plays a role in various processes in adults such as regulation of blood vessel formation, blood pressure, heart contractility and heart failure. In terms of biological role, (Microbial infection) Alternative coreceptor with CD4 for HIV-1 infection; may be involved in the development of AIDS dementia. The chain is Apelin receptor from Homo sapiens (Human).